The chain runs to 1177 residues: DNA-directed RNA polymerase subunit beta (1177 aa).

The interval 1–36 is disordered; the sequence is MEGCILADSRQSKTAASPSPSRPQSSSNNSVPGAPN. Residues 17-32 show a composition bias toward low complexity; the sequence is SPSPSRPQSSSNNSVP.

Belongs to the RNA polymerase beta chain family. In terms of assembly, the RNAP catalytic core consists of 2 alpha, 1 beta, 1 beta' and 1 omega subunit. When a sigma factor is associated with the core the holoenzyme is formed, which can initiate transcription.

The enzyme catalyses RNA(n) + a ribonucleoside 5'-triphosphate = RNA(n+1) + diphosphate. DNA-dependent RNA polymerase catalyzes the transcription of DNA into RNA using the four ribonucleoside triphosphates as substrates. The protein is DNA-directed RNA polymerase subunit beta of Mycobacterium tuberculosis (strain ATCC 25177 / H37Ra).